Consider the following 515-residue polypeptide: 1-pyrroline-5-carboxylate dehydrogenase (515 aa).

Residues Glu-286 and Cys-320 contribute to the active site.

The protein belongs to the aldehyde dehydrogenase family. RocA subfamily.

It carries out the reaction L-glutamate 5-semialdehyde + NAD(+) + H2O = L-glutamate + NADH + 2 H(+). The protein operates within amino-acid degradation; L-proline degradation into L-glutamate; L-glutamate from L-proline: step 2/2. The sequence is that of 1-pyrroline-5-carboxylate dehydrogenase from Anoxybacillus flavithermus (strain DSM 21510 / WK1).